Reading from the N-terminus, the 230-residue chain is Modulator of macroautophagy TMEM150B-A (230 aa).

Met1 is a topological domain (cytoplasmic). Residues 2 to 22 (WAWALLPICLTIWATAGIWIV) form a helical membrane-spanning segment. The Extracellular segment spans residues 23 to 50 (YGMSVSNGSVNLSDGFPYISLCGTDPPQ). Residues Asn29 and Asn33 are each glycosylated (N-linked (GlcNAc...) asparagine). A helical membrane pass occupies residues 51 to 71 (SCVFGQVLNVGAMLGVWISAI). The Cytoplasmic segment spans residues 72–83 (RFQQIRDYNCHS). Residues 84 to 104 (VLNSVSLAMGILCALGTSIVG) form a helical membrane-spanning segment. Residues 105–115 (NFQQSNQLETH) are Extracellular-facing. A helical membrane pass occupies residues 116–136 (LAGAFLAFVIGNIYFWMQTAL). The Cytoplasmic segment spans residues 137 to 150 (TYMVKPTHGGCYIG). The chain crosses the membrane as a helical span at residues 151–171 (PIRFCLSVACTALIVLMAVFL). Over 172-183 (KMNMKSISAICE) the chain is Extracellular. Residues 184–204 (WIVAMILFLLYGLFAVDFWHL) form a helical membrane-spanning segment. Residues 205 to 230 (DGHYFHVKKRTVIPNEMQVSTVTLSI) lie on the Cytoplasmic side of the membrane.

Belongs to the DRAM/TMEM150 family.

Its subcellular location is the cell membrane. It localises to the endosome membrane. It is found in the cytoplasmic vesicle. The protein localises to the autophagosome membrane. Its function is as follows. Modulator of macroautophagy that causes accumulation of autophagosomes under basal conditions and enhances autophagic flux. Represses cell death and promotes long-term clonogenic survival of cells grown in the absence of glucose in a macroautophagy-independent manner. May have some role in extracellular matrix engulfment or growth factor receptor recycling, both of which can modulate cell survival. The chain is Modulator of macroautophagy TMEM150B-A from Xenopus laevis (African clawed frog).